Here is a 245-residue protein sequence, read N- to C-terminus: Phycocyanobilin:ferredoxin oxidoreductase (245 aa).

It belongs to the HY2 family.

It catalyses the reaction (2R,3Z)-phycocyanobilin + 4 oxidized [2Fe-2S]-[ferredoxin] = biliverdin IXalpha + 4 reduced [2Fe-2S]-[ferredoxin] + 4 H(+). Catalyzes the four-electron reduction of biliverdin IX-alpha (2-electron reduction at both the A and D rings); the reaction proceeds via an isolatable 2-electron intermediate, 181,182-dihydrobiliverdin. The polypeptide is Phycocyanobilin:ferredoxin oxidoreductase (Microcystis aeruginosa (strain NIES-843 / IAM M-2473)).